The sequence spans 497 residues: Cobyric acid synthase (497 aa).

The GATase cobBQ-type domain maps to 251–443 (DLKIGVVWYP…LHGLFDNDFF (193 aa)). The active-site Nucleophile is the Cys-333. The active site involves His-435.

It belongs to the CobB/CobQ family. CobQ subfamily.

It participates in cofactor biosynthesis; adenosylcobalamin biosynthesis. In terms of biological role, catalyzes amidations at positions B, D, E, and G on adenosylcobyrinic A,C-diamide. NH(2) groups are provided by glutamine, and one molecule of ATP is hydrogenolyzed for each amidation. This is Cobyric acid synthase from Carboxydothermus hydrogenoformans (strain ATCC BAA-161 / DSM 6008 / Z-2901).